Here is a 255-residue protein sequence, read N- to C-terminus: Microfibril-associated glycoprotein 4 (255 aa).

An N-terminal signal peptide occupies residues 1–21 (MKALLALPLLLLLSTPPCAPQ). The Cell attachment site signature appears at 26–28 (RGD). The Fibrinogen C-terminal domain occupies 32-255 (RFCLQQPLDC…KRTEMKIRRA (224 aa)). Residues asparagine 87 and asparagine 137 are each glycosylated (N-linked (GlcNAc...) asparagine).

As to quaternary structure, homodimer. Can also form higher oligomers. Interacts with FBN1, FBN2 and LOX. Interacts with COL1A1 in a Ca (2+)-dependent manner. Interacts with ELN in a Ca (2+)-dependent manner; this interaction promotes ELN self-assembly.

It is found in the secreted. The protein resides in the extracellular space. The protein localises to the extracellular matrix. In terms of biological role, could be involved in calcium-dependent cell adhesion or intercellular interactions. May contribute to the elastic fiber assembly and/or maintenance. In Homo sapiens (Human), this protein is Microfibril-associated glycoprotein 4 (MFAP4).